The following is a 159-amino-acid chain: Ribosomal RNA large subunit methyltransferase H (159 aa).

S-adenosyl-L-methionine is bound by residues leucine 76, glycine 108, and 127–132 (FSPMTF).

The protein belongs to the RNA methyltransferase RlmH family. In terms of assembly, homodimer.

The protein resides in the cytoplasm. The catalysed reaction is pseudouridine(1915) in 23S rRNA + S-adenosyl-L-methionine = N(3)-methylpseudouridine(1915) in 23S rRNA + S-adenosyl-L-homocysteine + H(+). In terms of biological role, specifically methylates the pseudouridine at position 1915 (m3Psi1915) in 23S rRNA. The chain is Ribosomal RNA large subunit methyltransferase H from Alkaliphilus metalliredigens (strain QYMF).